Consider the following 156-residue polypeptide: Small ribosomal subunit protein uS7 (156 aa).

The protein belongs to the universal ribosomal protein uS7 family. As to quaternary structure, part of the 30S ribosomal subunit. Contacts proteins S9 and S11.

Its function is as follows. One of the primary rRNA binding proteins, it binds directly to 16S rRNA where it nucleates assembly of the head domain of the 30S subunit. Is located at the subunit interface close to the decoding center, probably blocks exit of the E-site tRNA. The sequence is that of Small ribosomal subunit protein uS7 from Streptococcus pneumoniae (strain Taiwan19F-14).